The sequence spans 387 residues: Exodeoxyribonuclease 7 large subunit (387 aa).

It belongs to the XseA family. In terms of assembly, heterooligomer composed of large and small subunits.

The protein resides in the cytoplasm. It catalyses the reaction Exonucleolytic cleavage in either 5'- to 3'- or 3'- to 5'-direction to yield nucleoside 5'-phosphates.. Its function is as follows. Bidirectionally degrades single-stranded DNA into large acid-insoluble oligonucleotides, which are then degraded further into small acid-soluble oligonucleotides. In Campylobacter jejuni subsp. jejuni serotype O:2 (strain ATCC 700819 / NCTC 11168), this protein is Exodeoxyribonuclease 7 large subunit.